Reading from the N-terminus, the 355-residue chain is Heme A synthase (355 aa).

8 helical membrane passes run 21-41 (LARWLWAVALLVIIVVGVGGI), 85-102 (INLGMTLAGFKAIFFWEW), 136-156 (LFALTALVGLQGAIGWWMVAS), 173-193 (LLTALFLLAGLVWTARDLGAL), 208-228 (AIGVIAILFVQLLLGAWVAGL), 264-284 (FLIHFLHRWWSWAAAGALLLL), 299-319 (ALVIVVAAQMLLGIWTIVSGV), and 322-342 (WVAVMHQVVGAILVAVTAAAL). His-270 is a binding site for heme. His-327 provides a ligand contact to heme.

The protein belongs to the COX15/CtaA family. Type 2 subfamily. Interacts with CtaB. Requires heme b as cofactor.

It is found in the cell membrane. The catalysed reaction is Fe(II)-heme o + 2 A + H2O = Fe(II)-heme a + 2 AH2. It participates in porphyrin-containing compound metabolism; heme A biosynthesis; heme A from heme O: step 1/1. Functionally, catalyzes the conversion of heme O to heme A by two successive hydroxylations of the methyl group at C8. The first hydroxylation forms heme I, the second hydroxylation results in an unstable dihydroxymethyl group, which spontaneously dehydrates, resulting in the formyl group of heme A. This Sphingopyxis alaskensis (strain DSM 13593 / LMG 18877 / RB2256) (Sphingomonas alaskensis) protein is Heme A synthase.